The primary structure comprises 303 residues: Bifunctional protein FolD (303 aa).

NADP(+) is bound by residues 169–171, threonine 196, and valine 237; that span reads GRG.

This sequence belongs to the tetrahydrofolate dehydrogenase/cyclohydrolase family. Homodimer.

The catalysed reaction is (6R)-5,10-methylene-5,6,7,8-tetrahydrofolate + NADP(+) = (6R)-5,10-methenyltetrahydrofolate + NADPH. It carries out the reaction (6R)-5,10-methenyltetrahydrofolate + H2O = (6R)-10-formyltetrahydrofolate + H(+). It functions in the pathway one-carbon metabolism; tetrahydrofolate interconversion. Its function is as follows. Catalyzes the oxidation of 5,10-methylenetetrahydrofolate to 5,10-methenyltetrahydrofolate and then the hydrolysis of 5,10-methenyltetrahydrofolate to 10-formyltetrahydrofolate. The polypeptide is Bifunctional protein FolD (Micrococcus luteus (strain ATCC 4698 / DSM 20030 / JCM 1464 / CCM 169 / CCUG 5858 / IAM 1056 / NBRC 3333 / NCIMB 9278 / NCTC 2665 / VKM Ac-2230) (Micrococcus lysodeikticus)).